Reading from the N-terminus, the 141-residue chain is Large ribosomal subunit protein uL13 (141 aa).

It belongs to the universal ribosomal protein uL13 family. As to quaternary structure, part of the 50S ribosomal subunit.

In terms of biological role, this protein is one of the early assembly proteins of the 50S ribosomal subunit, although it is not seen to bind rRNA by itself. It is important during the early stages of 50S assembly. The protein is Large ribosomal subunit protein uL13 of Deinococcus deserti (strain DSM 17065 / CIP 109153 / LMG 22923 / VCD115).